We begin with the raw amino-acid sequence, 465 residues long: Gamma-aminobutyric acid receptor subunit gamma-1 (465 aa).

An N-terminal signal peptide occupies residues 1–35 (MGPLKAFLFSPFLLRSQSRGVRLVFLLLTLHLGNC). Residues 36 to 273 (VDKADDEDDE…FDLSRRMGYF (238 aa)) are Extracellular-facing. N-linked (GlcNAc...) asparagine glycans are attached at residues Asn-50 and Asn-127. The cysteines at positions 188 and 202 are disulfide-linked. N-linked (GlcNAc...) asparagine glycosylation occurs at Asn-245. The helical transmembrane segment at 274 to 294 (TIQTYIPCILTVVLSWVSFWI) threads the bilayer. At 295–300 (NKDAVP) the chain is on the cytoplasmic side. The helical transmembrane segment at 301-320 (ARTSLGITTVLTMTTLSTIA) threads the bilayer. At 321–328 (RKSLPKVS) the chain is on the extracellular side. A helical membrane pass occupies residues 329 to 349 (YVTAMDLFVSVCFIFVFAALM). Residues 350–444 (EYGTLHYFTS…RIAKIDSYSR (95 aa)) lie on the Cytoplasmic side of the membrane. The helical transmembrane segment at 445-465 (IFFPTAFALFNLVYWVGYLYL) threads the bilayer.

This sequence belongs to the ligand-gated ion channel (TC 1.A.9) family. Gamma-aminobutyric acid receptor (TC 1.A.9.5) subfamily. GABRG1 sub-subfamily. Heteropentamer, formed by a combination of alpha (GABRA1-6), beta (GABRB1-3), gamma (GABRG1-3), delta (GABRD), epsilon (GABRE), rho (GABRR1-3), pi (GABRP) and theta (GABRQ) chains, each subunit exhibiting distinct physiological and pharmacological properties. May be palmitoylated.

The protein localises to the postsynaptic cell membrane. It localises to the cell membrane. The catalysed reaction is chloride(in) = chloride(out). Gamma subunit of the heteropentameric ligand-gated chloride channel gated by gamma-aminobutyric acid (GABA), a major inhibitory neurotransmitter in the brain. GABA-gated chloride channels, also named GABA(A) receptors (GABAAR), consist of five subunits arranged around a central pore and contain GABA active binding site(s) located at the alpha and beta subunit interface(s). When activated by GABA, GABAARs selectively allow the flow of chloride anions across the cell membrane down their electrochemical gradient. Chloride influx into the postsynaptic neuron following GABAAR opening decreases the neuron ability to generate a new action potential, thereby reducing nerve transmission. This is Gamma-aminobutyric acid receptor subunit gamma-1 from Homo sapiens (Human).